A 322-amino-acid polypeptide reads, in one-letter code: Malate dehydrogenase (322 aa).

NAD(+) is bound by residues 10–15 (GSGQIG) and Asp34. Arg83 and Arg89 together coordinate substrate. Residues Asn96 and 119–121 (ITN) each bind NAD(+). Positions 121 and 152 each coordinate substrate. The active-site Proton acceptor is His176.

Belongs to the LDH/MDH superfamily. MDH type 3 family.

The catalysed reaction is (S)-malate + NAD(+) = oxaloacetate + NADH + H(+). Its function is as follows. Catalyzes the reversible oxidation of malate to oxaloacetate. The protein is Malate dehydrogenase of Nitrobacter hamburgensis (strain DSM 10229 / NCIMB 13809 / X14).